The primary structure comprises 294 residues: NAD kinase (294 aa).

The Proton acceptor role is filled by Asp-74. NAD(+)-binding positions include 74–75 (DG), Lys-79, 149–150 (NE), Asp-179, 190–195 (TGYSLS), and Ala-214.

It belongs to the NAD kinase family. The cofactor is a divalent metal cation.

The protein resides in the cytoplasm. The catalysed reaction is NAD(+) + ATP = ADP + NADP(+) + H(+). Involved in the regulation of the intracellular balance of NAD and NADP, and is a key enzyme in the biosynthesis of NADP. Catalyzes specifically the phosphorylation on 2'-hydroxyl of the adenosine moiety of NAD to yield NADP. This chain is NAD kinase, found in Christiangramia forsetii (strain DSM 17595 / CGMCC 1.15422 / KT0803) (Gramella forsetii).